Reading from the N-terminus, the 112-residue chain is MKKQYRLRKNWEFDLVLKNKKFIANKYVIVYYKKASAFKVGITVPKKFANSVGRNYHKRQMKAIVHKMNLYNYPYEMVIIIRKNFINCNFLTKVIEIEKIFTQFKQQNEKIK.

Belongs to the RnpA family. As to quaternary structure, consists of a catalytic RNA component (M1 or rnpB) and a protein subunit.

The enzyme catalyses Endonucleolytic cleavage of RNA, removing 5'-extranucleotides from tRNA precursor.. Functionally, RNaseP catalyzes the removal of the 5'-leader sequence from pre-tRNA to produce the mature 5'-terminus. It can also cleave other RNA substrates such as 4.5S RNA. The protein component plays an auxiliary but essential role in vivo by binding to the 5'-leader sequence and broadening the substrate specificity of the ribozyme. The protein is Ribonuclease P protein component of Mycoplasmopsis synoviae (strain 53) (Mycoplasma synoviae).